A 243-amino-acid polypeptide reads, in one-letter code: tRNA (guanine-N(1)-)-methyltransferase (243 aa).

Residues glycine 112 and 131–136 each bind S-adenosyl-L-methionine; that span reads LGDYVL.

It belongs to the RNA methyltransferase TrmD family. As to quaternary structure, homodimer.

The protein localises to the cytoplasm. It carries out the reaction guanosine(37) in tRNA + S-adenosyl-L-methionine = N(1)-methylguanosine(37) in tRNA + S-adenosyl-L-homocysteine + H(+). Specifically methylates guanosine-37 in various tRNAs. In Leuconostoc mesenteroides subsp. mesenteroides (strain ATCC 8293 / DSM 20343 / BCRC 11652 / CCM 1803 / JCM 6124 / NCDO 523 / NBRC 100496 / NCIMB 8023 / NCTC 12954 / NRRL B-1118 / 37Y), this protein is tRNA (guanine-N(1)-)-methyltransferase.